The sequence spans 498 residues: Bifunctional protein GlmU (498 aa).

Residues Met1–Arg238 form a pyrophosphorylase region. UDP-N-acetyl-alpha-D-glucosamine-binding positions include Leu9–Gly12, Lys23, Gln80, and Gly85–Thr86. Position 111 (Asp111) interacts with Mg(2+). The UDP-N-acetyl-alpha-D-glucosamine site is built by Gly148, Glu163, Asn178, and Asn236. Residue Asn236 coordinates Mg(2+). The tract at residues Val239–Ala259 is linker. The tract at residues Gly260–Glu498 is N-acetyltransferase. The UDP-N-acetyl-alpha-D-glucosamine site is built by Arg341 and Lys359. His371 serves as the catalytic Proton acceptor. The UDP-N-acetyl-alpha-D-glucosamine site is built by Tyr374 and Asn385. Acetyl-CoA is bound by residues Ala388, Asn394–Tyr395, Ser413, and Ala431. Residues Ala470–Glu498 are disordered.

It in the N-terminal section; belongs to the N-acetylglucosamine-1-phosphate uridyltransferase family. The protein in the C-terminal section; belongs to the transferase hexapeptide repeat family. As to quaternary structure, homotrimer. Mg(2+) serves as cofactor.

The protein resides in the cytoplasm. The catalysed reaction is alpha-D-glucosamine 1-phosphate + acetyl-CoA = N-acetyl-alpha-D-glucosamine 1-phosphate + CoA + H(+). The enzyme catalyses N-acetyl-alpha-D-glucosamine 1-phosphate + UTP + H(+) = UDP-N-acetyl-alpha-D-glucosamine + diphosphate. It participates in nucleotide-sugar biosynthesis; UDP-N-acetyl-alpha-D-glucosamine biosynthesis; N-acetyl-alpha-D-glucosamine 1-phosphate from alpha-D-glucosamine 6-phosphate (route II): step 2/2. It functions in the pathway nucleotide-sugar biosynthesis; UDP-N-acetyl-alpha-D-glucosamine biosynthesis; UDP-N-acetyl-alpha-D-glucosamine from N-acetyl-alpha-D-glucosamine 1-phosphate: step 1/1. The protein operates within bacterial outer membrane biogenesis; LPS lipid A biosynthesis. Functionally, catalyzes the last two sequential reactions in the de novo biosynthetic pathway for UDP-N-acetylglucosamine (UDP-GlcNAc). The C-terminal domain catalyzes the transfer of acetyl group from acetyl coenzyme A to glucosamine-1-phosphate (GlcN-1-P) to produce N-acetylglucosamine-1-phosphate (GlcNAc-1-P), which is converted into UDP-GlcNAc by the transfer of uridine 5-monophosphate (from uridine 5-triphosphate), a reaction catalyzed by the N-terminal domain. This is Bifunctional protein GlmU from Mycolicibacterium gilvum (strain PYR-GCK) (Mycobacterium gilvum (strain PYR-GCK)).